The sequence spans 505 residues: uncharacterized protein (505 aa).

The active-site Proton acceptor is the histidine 431.

It belongs to the GMC oxidoreductase family. It depends on FAD as a cofactor.

This is an uncharacterized protein from Sinorhizobium fredii (strain NBRC 101917 / NGR234).